A 97-amino-acid polypeptide reads, in one-letter code: YcgL domain-containing protein Pmen_1774 (97 aa).

Positions 3-87 constitute a YcgL domain; the sequence is RICSIYKSPR…PEEDYIQHLP (85 aa).

This chain is YcgL domain-containing protein Pmen_1774, found in Ectopseudomonas mendocina (strain ymp) (Pseudomonas mendocina).